We begin with the raw amino-acid sequence, 335 residues long: uncharacterized protein (335 aa).

Transmembrane regions (helical) follow at residues 104–124, 128–148, 280–300, and 310–330; these read FKKVVIYMIITFLALLFMGLL, LLQGFVNGLIGAGIILVLSLF, LAFGVGLILPFTGMILSTMIG, and TINLLLLKIGPLLTLIFGIFV.

It is found in the cell membrane. This is an uncharacterized protein from Methanocaldococcus jannaschii (strain ATCC 43067 / DSM 2661 / JAL-1 / JCM 10045 / NBRC 100440) (Methanococcus jannaschii).